Here is a 317-residue protein sequence, read N- to C-terminus: Olfactory receptor 5K16 (317 aa).

Residues 1 to 28 (MEKTNHSLTTQFILVGFSDHPDLKTPLF) are Extracellular-facing. Asn-5 carries an N-linked (GlcNAc...) asparagine glycan. Residues 29–49 (LLFSVIYLVTMVGNLGLVAVI) traverse the membrane as a helical segment. Over 50-56 (YLEPRLH) the chain is Cytoplasmic. Residues 57–77 (TPMYIFLGNLALMDSCCSCAI) traverse the membrane as a helical segment. The Extracellular portion of the chain corresponds to 78–93 (TPKILENFFSVDRRIS). Residues 94-114 (LYECMAQFYFLCLAETADCFL) traverse the membrane as a helical segment. A disulfide bridge connects residues Cys-97 and Cys-189. Residues 115-144 (LAAMAYDRYVAICNPLQYHSMMSKKLSIQM) lie on the Cytoplasmic side of the membrane. Residues 145–165 (SIGTFITSNLHSLIHVGCLLR) traverse the membrane as a helical segment. Residues 166-198 (LTFCKSNRIDHFFCDILPLYRLSCTDPFINELM) are Extracellular-facing. Residues 199-219 (IYIFSMPIQVFTITTVLVSYF) traverse the membrane as a helical segment. Residues 220–239 (CILLTIFKMKSKDGRGKAFS) lie on the Cytoplasmic side of the membrane. Residues 240-259 (TCASHFFSVSIFYVCLLMYI) form a helical membrane-spanning segment. Over 260–268 (RPFDEGNKD) the chain is Extracellular. Residues 269 to 289 (IPVAVFYTIIIPLLNPFIYSL) traverse the membrane as a helical segment. Topologically, residues 290-317 (RNKEVVNAVKKVMKTHSIFKNASASMAR) are cytoplasmic.

This sequence belongs to the G-protein coupled receptor 1 family.

Its subcellular location is the cell membrane. Potential odorant receptor. The chain is Olfactory receptor 5K16 from Mus musculus (Mouse).